Reading from the N-terminus, the 269-residue chain is Prespore protein Dd31 (269 aa).

Positions 1–17 (MEHNNNPGTPQMSSEFP) are enriched in polar residues. A disordered region spans residues 1 to 35 (MEHNNNPGTPQMSSEFPASTTQTSSSAAAYDNSSH). The span at 18-29 (ASTTQTSSSAAA) shows a compositional bias: low complexity. Helical transmembrane passes span 111 to 131 (FGIF…VVSI), 139 to 159 (VDNF…LYFL), 177 to 197 (YAYL…FVGF), and 225 to 245 (VSLF…IMYL).

The protein belongs to the SCAMP family.

The protein localises to the membrane. The protein resides in the spore coat. This Dictyostelium discoideum (Social amoeba) protein is Prespore protein Dd31 (spiA).